A 135-amino-acid polypeptide reads, in one-letter code: Transcription antitermination protein NusB (135 aa).

A disordered region spans residues 115–135 (ATPAESTGRGSAVDSIPGQPS).

It belongs to the NusB family.

Its function is as follows. Involved in transcription antitermination. Required for transcription of ribosomal RNA (rRNA) genes. Binds specifically to the boxA antiterminator sequence of the ribosomal RNA (rrn) operons. This is Transcription antitermination protein NusB from Frankia casuarinae (strain DSM 45818 / CECT 9043 / HFP020203 / CcI3).